Here is a 326-residue protein sequence, read N- to C-terminus: Beta-ketoacyl-[acyl-carrier-protein] synthase III (326 aa).

Residues Cys120 and His253 contribute to the active site. Positions 254-258 (QANIR) are ACP-binding. Residue Asn283 is part of the active site.

Belongs to the thiolase-like superfamily. FabH family. Homodimer.

Its subcellular location is the cytoplasm. The catalysed reaction is malonyl-[ACP] + acetyl-CoA + H(+) = 3-oxobutanoyl-[ACP] + CO2 + CoA. The protein operates within lipid metabolism; fatty acid biosynthesis. In terms of biological role, catalyzes the condensation reaction of fatty acid synthesis by the addition to an acyl acceptor of two carbons from malonyl-ACP. Catalyzes the first condensation reaction which initiates fatty acid synthesis and may therefore play a role in governing the total rate of fatty acid production. Possesses both acetoacetyl-ACP synthase and acetyl transacylase activities. Its substrate specificity determines the biosynthesis of branched-chain and/or straight-chain of fatty acids. The sequence is that of Beta-ketoacyl-[acyl-carrier-protein] synthase III from Ralstonia pickettii (strain 12J).